We begin with the raw amino-acid sequence, 445 residues long: 3-phosphoshikimate 1-carboxyvinyltransferase (445 aa).

3 residues coordinate 3-phosphoshikimate: lysine 28, serine 29, and arginine 33. Lysine 28 contacts phosphoenolpyruvate. Positions 101 and 129 each coordinate phosphoenolpyruvate. Residues serine 175, glutamine 177, aspartate 328, and lysine 355 each contribute to the 3-phosphoshikimate site. Glutamine 177 contacts phosphoenolpyruvate. Aspartate 328 (proton acceptor) is an active-site residue. The phosphoenolpyruvate site is built by arginine 359 and arginine 402.

Belongs to the EPSP synthase family. In terms of assembly, monomer.

The protein localises to the cytoplasm. The catalysed reaction is 3-phosphoshikimate + phosphoenolpyruvate = 5-O-(1-carboxyvinyl)-3-phosphoshikimate + phosphate. The protein operates within metabolic intermediate biosynthesis; chorismate biosynthesis; chorismate from D-erythrose 4-phosphate and phosphoenolpyruvate: step 6/7. Functionally, catalyzes the transfer of the enolpyruvyl moiety of phosphoenolpyruvate (PEP) to the 5-hydroxyl of shikimate-3-phosphate (S3P) to produce enolpyruvyl shikimate-3-phosphate and inorganic phosphate. In Rhodopseudomonas palustris (strain BisA53), this protein is 3-phosphoshikimate 1-carboxyvinyltransferase.